The primary structure comprises 518 residues: Glutamate--cysteine ligase (518 aa).

Belongs to the glutamate--cysteine ligase type 1 family. Type 1 subfamily.

It carries out the reaction L-cysteine + L-glutamate + ATP = gamma-L-glutamyl-L-cysteine + ADP + phosphate + H(+). It functions in the pathway sulfur metabolism; glutathione biosynthesis; glutathione from L-cysteine and L-glutamate: step 1/2. This Escherichia coli O157:H7 protein is Glutamate--cysteine ligase.